We begin with the raw amino-acid sequence, 45 residues long: Large ribosomal subunit protein bL34 (45 aa).

The tract at residues 1–45 (MTKRTFGGTSRKRKRVSGFRVRMRSHTGRRVIKSRRKRGRERIAV) is disordered. Residues 10 to 45 (SRKRKRVSGFRVRMRSHTGRRVIKSRRKRGRERIAV) are compositionally biased toward basic residues.

Belongs to the bacterial ribosomal protein bL34 family.

The protein is Large ribosomal subunit protein bL34 of Prochlorococcus marinus subsp. pastoris (strain CCMP1986 / NIES-2087 / MED4).